The primary structure comprises 416 residues: Protein-glutamine gamma-glutamyltransferase (416 aa).

Positions 1-29 (MHKRRRLLAFATVGAVICTAGFTPSVSQA) form a signal peptide, tat-type signal. Positions 30-85 (ASSGDGEEKGSYAETHGLTADDVESINALNERALTLGQPGKPPKELPPSASAPSRA) are excised as a propeptide. The disordered stretch occupies residues 64 to 103 (TLGQPGKPPKELPPSASAPSRAPSDDRETPPAEPLDRMPE). Low complexity predominate over residues 76–85 (PPSASAPSRA). The segment covering 86 to 103 (PSDDRETPPAEPLDRMPE) has biased composition (basic and acidic residues). The active site involves C149. Residues 290 to 331 (GQDQRGSSDKRKYGDPEAFRPDQGTGLVDMSKDRSIPRSPAK) are disordered. The segment covering 295–309 (GSSDKRKYGDPEAFR) has biased composition (basic and acidic residues). Residues D340 and H359 contribute to the active site.

It belongs to the bacterial TGase family. Predicted to be exported by the Tat system. The position of the signal peptide cleavage has not been experimentally proven.

The catalysed reaction is L-glutaminyl-[protein] + L-lysyl-[protein] = [protein]-L-lysyl-N(6)-5-L-glutamyl-[protein] + NH4(+). Its function is as follows. Catalyzes the cross-linking of proteins and the conjugation of polyamines to proteins. This is Protein-glutamine gamma-glutamyltransferase from Streptomyces cinnamoneus (Streptoverticillium cinnamoneum).